A 223-amino-acid chain; its full sequence is Guanylate kinase (223 aa).

The disordered stretch occupies residues 1 to 22 (MTADGGPDVRHGTRPEPSGDGR). A compositionally biased stretch (basic and acidic residues) spans 7–19 (PDVRHGTRPEPSG). The Guanylate kinase-like domain maps to 21 to 201 (GRVVVLSGPS…ACAELVSLLV (181 aa)). 28-35 (GPSAVGKS) lines the ATP pocket. The segment at 204 to 223 (APDRHDTSGRTGRQTTSHPD) is disordered. Polar residues predominate over residues 212–223 (GRTGRQTTSHPD).

The protein belongs to the guanylate kinase family.

Its subcellular location is the cytoplasm. It catalyses the reaction GMP + ATP = GDP + ADP. Functionally, essential for recycling GMP and indirectly, cGMP. This is Guanylate kinase from Mycolicibacterium paratuberculosis (strain ATCC BAA-968 / K-10) (Mycobacterium paratuberculosis).